The sequence spans 422 residues: MDKIVIEGGVPLRGSVDVSGAKNAALPVIAAALLAEGEHEVRNVPDLADVRTLGKLLGHMGCEVVRGEGDRRTVRLRVPAAVTPEAPYELVKTMRASVLVLGPLLARLGRARVSLPGGCAIGARPIDQHLKALTALGAEIRLEHGYVNASVPGGRLRGTVFTFDAQTVTGTENVMMAAALAEGETVLRNCAREPEVKDLGDALVAMGALVEGAGTDEIWIEGVPSLRPLSHAVIPDRIEAGTFLVAGALPGNDVTVRGCVAAHQEALVEKLRAVGAEVTKVEGGLRVIGDGRPRPVDVRTAPHPGFPTDMQAQLMVLLCLADGTSRITETVFENRFMHVQELIRLGAHVEVDGRVAMVKGVPELSGAPVMASDLRASAALVLAGLAATGTTEVLRVYHLDRGYERIEEKLAPLGARIRRVRG.

Position 22-23 (22-23) interacts with phosphoenolpyruvate; sequence KN. A UDP-N-acetyl-alpha-D-glucosamine-binding site is contributed by arginine 95. Residue cysteine 119 is the Proton donor of the active site. Position 119 is a 2-(S-cysteinyl)pyruvic acid O-phosphothioketal (cysteine 119). UDP-N-acetyl-alpha-D-glucosamine contacts are provided by residues 124–128, aspartate 309, and valine 331; that span reads RPIDQ.

It belongs to the EPSP synthase family. MurA subfamily.

It localises to the cytoplasm. The enzyme catalyses phosphoenolpyruvate + UDP-N-acetyl-alpha-D-glucosamine = UDP-N-acetyl-3-O-(1-carboxyvinyl)-alpha-D-glucosamine + phosphate. It participates in cell wall biogenesis; peptidoglycan biosynthesis. Functionally, cell wall formation. Adds enolpyruvyl to UDP-N-acetylglucosamine. In Anaeromyxobacter dehalogenans (strain 2CP-C), this protein is UDP-N-acetylglucosamine 1-carboxyvinyltransferase.